Here is a 115-residue protein sequence, read N- to C-terminus: Large ribosomal subunit protein bL20c (115 aa).

It belongs to the bacterial ribosomal protein bL20 family.

The protein localises to the plastid. It is found in the chloroplast. Binds directly to 23S ribosomal RNA and is necessary for the in vitro assembly process of the 50S ribosomal subunit. It is not involved in the protein synthesizing functions of that subunit. The sequence is that of Large ribosomal subunit protein bL20c from Cycas taitungensis (Prince sago).